The sequence spans 876 residues: Leucine--tRNA ligase (876 aa).

The short motif at 42–52 (PYPSGKLHMGH) is the 'HIGH' region element. Residues 634–638 (KMSKS) carry the 'KMSKS' region motif. K637 contacts ATP.

The protein belongs to the class-I aminoacyl-tRNA synthetase family.

The protein resides in the cytoplasm. It carries out the reaction tRNA(Leu) + L-leucine + ATP = L-leucyl-tRNA(Leu) + AMP + diphosphate. The chain is Leucine--tRNA ligase from Neisseria meningitidis serogroup C / serotype 2a (strain ATCC 700532 / DSM 15464 / FAM18).